The chain runs to 264 residues: 3-methyl-2-oxobutanoate hydroxymethyltransferase (264 aa).

2 residues coordinate Mg(2+): aspartate 45 and aspartate 84. 3-methyl-2-oxobutanoate contacts are provided by residues 45-46 (DS), aspartate 84, and lysine 112. Glutamate 114 is a Mg(2+) binding site. Glutamate 181 (proton acceptor) is an active-site residue.

Belongs to the PanB family. In terms of assembly, homodecamer; pentamer of dimers. The cofactor is Mg(2+).

It localises to the cytoplasm. The enzyme catalyses 3-methyl-2-oxobutanoate + (6R)-5,10-methylene-5,6,7,8-tetrahydrofolate + H2O = 2-dehydropantoate + (6S)-5,6,7,8-tetrahydrofolate. It functions in the pathway cofactor biosynthesis; (R)-pantothenate biosynthesis; (R)-pantoate from 3-methyl-2-oxobutanoate: step 1/2. Its function is as follows. Catalyzes the reversible reaction in which hydroxymethyl group from 5,10-methylenetetrahydrofolate is transferred onto alpha-ketoisovalerate to form ketopantoate. The polypeptide is 3-methyl-2-oxobutanoate hydroxymethyltransferase (Shewanella sp. (strain ANA-3)).